Reading from the N-terminus, the 475-residue chain is F-box/kelch-repeat protein At1g22040 (475 aa).

A disordered region spans residues 1-28; sequence MGSVMSLSCSKRKATSQDVECSSESRKR. In terms of domain architecture, F-box spans 41 to 87; that stretch reads CRLIPSLPDELSIQILARLPRICYSSVRLVSRRWRSAVSTSEVYSLR. Kelch repeat units follow at residues 94-140, 182-228, 229-279, 306-350, and 352-401; these read EEWL…KSLS, GLYV…VLNK, KLYV…AFLA, PFFV…VDGE, and YAFD…GFHG.

In Arabidopsis thaliana (Mouse-ear cress), this protein is F-box/kelch-repeat protein At1g22040.